A 796-amino-acid polypeptide reads, in one-letter code: Pathogenesis-related homeodomain protein (796 aa).

Disordered stretches follow at residues 34–57 (KKGKEVSNKRNSKQNKRKAEEELC) and 80–99 (VKKTRKRKSKRQQKDNKVEV). A compositionally biased stretch (basic residues) spans 81–90 (KKTRKRKSKR). The PHD-type zinc finger occupies 190-247 (HIFCAECNSREAFPDNDIILCDGTCNRAFHQKCLDPPLETESIPPGDQGWFCKFCDCK). Disordered regions lie at residues 282–347 (SEAT…STGS), 393–422 (LQEQGSEDEDWGPNDRRKRKRESDAGSTLV), and 511–736 (NRKT…TEEE). Over residues 292-303 (WPSDDSKDDDYD) the composition is skewed to acidic residues. Positions 452–511 (GGRRRMFRLPRNAVEKLRQVFAETELPSKAVRDRLAKELSLDPEKVNKWFKNTRYMALRN) form a DNA-binding region, homeobox. Polar residues-rich tracts occupy residues 538–547 (ENNTETNEVQ) and 560–569 (ATNQNILSPC). Positions 570-580 (NNNQEEFQQEN) are enriched in low complexity. Polar residues predominate over residues 581–600 (VSFPSPTDESQQYLEQNDSS). 4 tandem repeats follow at residues 605-631 (PHEKQSSEISLKTAVEENETESKMMKE), 632-658 (PHEELSSEMSLKTAAEEKETESKMIEE), 659-685 (PHEELSREMSLKTAVEEKETESKMMEE), and 686-712 (PHDELNSEMSLSTAVEEKETGSKMTEE). The tract at residues 605–735 (PHEKQSSEIS…KETGRKMTEE (131 aa)) is 5 X 27 AA tandem repeats. Composition is skewed to basic and acidic residues over residues 624 to 636 (TESKMMKEPHEEL), 645 to 690 (AAEE…HDEL), and 700 to 733 (VEEKETGSKMTEESHEELSNEMSLEEKETGRKMT). The 5; truncated repeat unit spans residues 713-735 (SHEELSNEMSLEEKETGRKMTEE). Residues 738–759 (LEAVMEMLCRTENKLLDVTQRL) form a leucine-zipper region.

It belongs to the PHD-associated homeobox family.

The protein localises to the nucleus. Its function is as follows. Specifically binds to the fungal elicitor-responsive DNA element, 5'-CTAATTGTTTA-3', of the gene PR2 promoter. This is Pathogenesis-related homeodomain protein (PRH) from Arabidopsis thaliana (Mouse-ear cress).